A 273-amino-acid polypeptide reads, in one-letter code: Undecaprenyl-diphosphatase (273 aa).

Helical transmembrane passes span 3-23, 48-68, 92-112, 116-136, 152-172, 193-213, 220-240, and 252-272; these read IVEIIKAIILGMVEGLTEFAP, AANTFKVVIQLGSILAVVVVF, MQVIVGLIPAGVLGVLFEDYI, LFSTATVLIGLVLGALLMIAA, ITYKQALIVGLVQCLSLWPGF, ADFTFIMAVPIMMGASVLSLL, TIDALPFFTAGFISAFLFALI, and IRLVPFAVYRIVLALVIYIVY.

Belongs to the UppP family.

Its subcellular location is the cell membrane. The catalysed reaction is di-trans,octa-cis-undecaprenyl diphosphate + H2O = di-trans,octa-cis-undecaprenyl phosphate + phosphate + H(+). Functionally, catalyzes the dephosphorylation of undecaprenyl diphosphate (UPP). Confers resistance to bacitracin. The chain is Undecaprenyl-diphosphatase from Geobacillus sp. (strain WCH70).